A 502-amino-acid chain; its full sequence is Protein YdgA (502 aa).

The first 19 residues, 1–19 (MNKSLVAVGVIVALGVVWT), serve as a signal peptide directing secretion.

To E.coli YihF and H.influenzae HI_1236. In terms of assembly, homodimer.

It localises to the cell inner membrane. The polypeptide is Protein YdgA (ydgA) (Escherichia coli (strain K12)).